Reading from the N-terminus, the 149-residue chain is UPF0756 membrane protein BBR47_32760 (149 aa).

The next 5 membrane-spanning stretches (helical) occupy residues 3–23 (WISIILLVLLALGVIGNNATV), 48–68 (HGLQLGIIILTIGIMTPLASG), 85–105 (LLAVAVGMFVAYLAGKGTVLM), 106–126 (SQNPLIVTGLLLGTIAGVTFF), and 128–148 (GVAVGPLIAAGILAFILQFLP).

It belongs to the UPF0756 family.

Its subcellular location is the cell membrane. This chain is UPF0756 membrane protein BBR47_32760, found in Brevibacillus brevis (strain 47 / JCM 6285 / NBRC 100599).